The following is a 433-amino-acid chain: Enolase (433 aa).

A (2R)-2-phosphoglycerate-binding site is contributed by glutamine 164. Glutamate 206 (proton donor) is an active-site residue. Positions 243, 289, and 316 each coordinate Mg(2+). Lysine 341, arginine 370, serine 371, and lysine 392 together coordinate (2R)-2-phosphoglycerate. Lysine 341 serves as the catalytic Proton acceptor.

Belongs to the enolase family. The cofactor is Mg(2+).

It is found in the cytoplasm. It localises to the secreted. The protein localises to the cell surface. It catalyses the reaction (2R)-2-phosphoglycerate = phosphoenolpyruvate + H2O. Its pathway is carbohydrate degradation; glycolysis; pyruvate from D-glyceraldehyde 3-phosphate: step 4/5. Functionally, catalyzes the reversible conversion of 2-phosphoglycerate (2-PG) into phosphoenolpyruvate (PEP). It is essential for the degradation of carbohydrates via glycolysis. The polypeptide is Enolase (Borreliella burgdorferi (strain ATCC 35210 / DSM 4680 / CIP 102532 / B31) (Borrelia burgdorferi)).